The following is a 445-amino-acid chain: ATPase PAAT (445 aa).

Phosphoserine is present on residues Ser177, Ser182, Ser254, and Ser302. The disordered stretch occupies residues 426 to 445 (PTGIPLRHYDSGERLSNGER). Over residues 432–445 (RHYDSGERLSNGER) the composition is skewed to basic and acidic residues.

Homodimer. Interacts with ABCB7, ABCB8/MITOSUR and ABCB10.

It is found in the cytoplasm. Its subcellular location is the mitochondrion. The catalysed reaction is ATP + H2O = ADP + phosphate + H(+). Its function is as follows. ATPase that regulates mitochondrial ABC transporters ABCB7, ABCB8/MITOSUR and ABCB10. Regulates mitochondrial ferric concentration and heme biosynthesis and plays a role in the maintenance of mitochondrial homeostasis and cell survival. This Homo sapiens (Human) protein is ATPase PAAT.